Consider the following 352-residue polypeptide: Sulfate-binding protein (352 aa).

Residues 1–40 form the signal peptide; the sequence is MARSAFGWGFSVIAVLMVGSITACNTTTTTEPGQGENASQ.

The protein belongs to the prokaryotic sulfate-binding protein family.

It localises to the periplasm. Functionally, this protein specifically binds sulfate and is involved in its transmembrane transport. The polypeptide is Sulfate-binding protein (sbpA) (Synechocystis sp. (strain ATCC 27184 / PCC 6803 / Kazusa)).